The chain runs to 152 residues: UPF0225 protein Ent638_2310 (152 aa).

It belongs to the UPF0225 family.

This Enterobacter sp. (strain 638) protein is UPF0225 protein Ent638_2310.